A 656-amino-acid chain; its full sequence is UvrABC system protein B (656 aa).

The 386-residue stretch at 24-409 folds into the Helicase ATP-binding domain; sequence QGVRNRTPSQ…QGHIVEQILR (386 aa). 37 to 44 lines the ATP pocket; it reads GTTGSGKT. The Beta-hairpin signature appears at 90–113; it reads YYDYYQPEAYIARNDTYIEKSLLI. Positions 426 to 589 constitute a Helicase C-terminal domain; that stretch reads QVDDLLEEIR…ITPKPIIKAI (164 aa). Positions 616–651 constitute a UVR domain; the sequence is EKLIKKYENLMLQAANAFRFDEAAQYRDKMKAAKEQ.

It belongs to the UvrB family. In terms of assembly, forms a heterotetramer with UvrA during the search for lesions. Interacts with UvrC in an incision complex.

It localises to the cytoplasm. Functionally, the UvrABC repair system catalyzes the recognition and processing of DNA lesions. A damage recognition complex composed of 2 UvrA and 2 UvrB subunits scans DNA for abnormalities. Upon binding of the UvrA(2)B(2) complex to a putative damaged site, the DNA wraps around one UvrB monomer. DNA wrap is dependent on ATP binding by UvrB and probably causes local melting of the DNA helix, facilitating insertion of UvrB beta-hairpin between the DNA strands. Then UvrB probes one DNA strand for the presence of a lesion. If a lesion is found the UvrA subunits dissociate and the UvrB-DNA preincision complex is formed. This complex is subsequently bound by UvrC and the second UvrB is released. If no lesion is found, the DNA wraps around the other UvrB subunit that will check the other stand for damage. The protein is UvrABC system protein B of Chlamydia abortus (strain DSM 27085 / S26/3) (Chlamydophila abortus).